A 474-amino-acid polypeptide reads, in one-letter code: MRNLKSVTPLLMAALLWGQSLLAQASLPDFTALVEEASPAVVNISTRQKMPERSVAAQPGLPDLEGLPPMFREFFERSIPQMPRNPGGRQREAQSLGSGFIISADGYVLTNNHVVADADEIIVRLSDRSELEAKLIGADPRSDVALLKVEGKGLPTVRLGKSDELKVGEWVLAIGSPFGFDHSVTAGIVSAKGRNLPSDSYVPFIQTDVAINPGNSGGPLFNLKGEVVGINSQIFTRSGGFMGLSFAIPMEVALQVSEQLKADGKVTRGWLGVVIQEVNKDLAESFGLDRPAGALVAQVLEDGPADKGGLQVGDVILSLNGKPIVMSADLPHLVGGLKPGEKAEMDVVRDGSRKKLKVTIGTLPEEGQELAAAGSTKGGERSSNRLGVTVVELTAEQKKGLDLRGGVVVKEVLSGPAAMIGLRPGDVITHLNNQAIDSTATFAKVAQELPKNRSVSMRVLRQGRASFITFKLAE.

Residues 1-25 (MRNLKSVTPLLMAALLWGQSLLAQA) form the signal peptide. Residues His113, Asp143, and Ser216 each act as charge relay system in the active site. Residues 214 to 216 (GNS) and 271 to 275 (LGVVI) contribute to the substrate site. PDZ domains lie at 260–351 (LKAD…VRDG) and 357–463 (KVTI…LRQG).

Belongs to the peptidase S1C family.

The protein localises to the periplasm. It catalyses the reaction Acts on substrates that are at least partially unfolded. The cleavage site P1 residue is normally between a pair of hydrophobic residues, such as Val-|-Val.. Its function is as follows. Might be efficient in the degradation of transiently denatured and unfolded proteins which accumulate in the periplasm following stress conditions. The polypeptide is Probable periplasmic serine endoprotease DegP-like (Ectopseudomonas mendocina (strain ymp) (Pseudomonas mendocina)).